Consider the following 662-residue polypeptide: Neurexin-2-beta (662 aa).

Positions 1 to 10 are enriched in gly residues; it reads MPPGGSGQGG. The disordered stretch occupies residues 1–27; that stretch reads MPPGGSGQGGCPRRPPALAGPLPPPPP. The signal sequence occupies residues 1–46; sequence MPPGGSGQGGCPRRPPALAGPLPPPPPPPPLPLLLGLLLLLGAAEG. Over 47–586 the chain is Extracellular; that stretch reads ARVSSSLSTT…EVIRESSSTT (540 aa). A Laminin G-like domain is found at 87–295; the sequence is TTYIFGKGGA…HLRLVGEGPS (209 aa). 2 residues coordinate Ca(2+): D139 and V156. N186 carries N-linked (GlcNAc...) asparagine glycosylation. Positions 238 and 240 each coordinate Ca(2+). S350 carries O-linked (Xyl...) (heparan sulfate) serine glycosylation. Disordered regions lie at residues 408–458, 476–496, and 530–557; these read ATQD…LPPT, LLSP…ATGA, and LGPG…PGFP. The helical transmembrane segment at 587-607 threads the bilayer; the sequence is GMVVGIVAAAALCILILLYAM. The Cytoplasmic segment spans residues 608–662; it reads YKYRNRDEGSYQVDQSRNYISNSAQSNGAVVKEKAPAAPKTPSKAKKNKDKEYYV. The disordered stretch occupies residues 629–662; sequence NSAQSNGAVVKEKAPAAPKTPSKAKKNKDKEYYV.

This sequence belongs to the neurexin family. Interacts (via cytoplasmic C-terminal region) with CASK. Isoform Beta 4b binds alpha-dystroglycan and neuroligins NLGN1, NLGN2 and NLGN3. Interacts with CBLN1, CBLN2 and, less avidly, with CBLN4. Interacts with CLSTN3. Post-translationally, O-glycosylated; contains heparan sulfate. Heparan sulfate attachment is required for synapse development by mediating interactions with neuroligins. Brain (neuronal synapse).

The protein resides in the presynaptic cell membrane. In terms of biological role, neuronal cell surface protein that may be involved in cell recognition and cell adhesion. This is Neurexin-2-beta (Nrxn2) from Rattus norvegicus (Rat).